The chain runs to 834 residues: Inner nuclear membrane protein SRC1 (834 aa).

The tract at residues 68–292 (DEGIVKMDRP…TANGTGHSTP (225 aa)) is disordered. Residues 77–86 (PSSSPSIASP) show a composition bias toward low complexity. Phosphoserine is present on residues Ser78, Ser80, and Ser85. 2 stretches are compositionally biased toward acidic residues: residues 114–127 (VSNDDDDDDDDDDD) and 142–153 (DTDEVDDEEDDV). Residues 154 to 170 (ITSSSNKSDTNDFQQNS) show a composition bias toward polar residues. At Ser181 the chain carries Phosphoserine. Basic and acidic residues predominate over residues 188–198 (NSKENKIDNKH). Phosphoserine occurs at positions 203, 204, and 206. Polar residues predominate over residues 243 to 266 (IKNTNRKPVSMDNFNDSLTSSGTE). Position 301 is a phosphoserine (Ser301). Residues 307-364 (PQKEVPSTILVPEVEQQEPSQSERTPSLFSSEGSGSESEAPLLPEITTPGPHQPMGNT) are disordered. 2 stretches are compositionally biased toward low complexity: residues 317 to 329 (VPEVEQQEPSQSE) and 336 to 345 (SSEGSGSESE). Thr394 is subject to Phosphothreonine. Ser427 is modified (phosphoserine). The next 2 helical transmembrane spans lie at 455 to 475 (LLALFLFCIFIVIPLLFGLWY) and 708 to 728 (IWLMFLLIVISKVIEIKLKNY).

Its subcellular location is the nucleus inner membrane. Functionally, plays a role in sister chromatid separation. In Saccharomyces cerevisiae (strain ATCC 204508 / S288c) (Baker's yeast), this protein is Inner nuclear membrane protein SRC1 (SRC1).